Reading from the N-terminus, the 408-residue chain is Arginine deiminase (408 aa).

Cys-397 functions as the Amidino-cysteine intermediate in the catalytic mechanism.

Belongs to the arginine deiminase family.

The protein localises to the cytoplasm. The catalysed reaction is L-arginine + H2O = L-citrulline + NH4(+). The protein operates within amino-acid degradation; L-arginine degradation via ADI pathway; carbamoyl phosphate from L-arginine: step 1/2. The protein is Arginine deiminase of Listeria innocua serovar 6a (strain ATCC BAA-680 / CLIP 11262).